A 304-amino-acid polypeptide reads, in one-letter code: uncharacterized protein (304 aa).

The tract at residues 1–183 (MTAPNEPGAL…ARVQLSARRS (183 aa)) is disordered. Over residues 132–166 (PTPRAPQRNPAPARPAEGGAGSRGDSAAGSSGGRS) the composition is skewed to low complexity. Helical transmembrane passes span 206–226 (LLLS…LYLV) and 265–285 (FLIG…GAFV).

It to M.leprae ML0007.

It is found in the cell membrane. This is an uncharacterized protein from Mycobacterium tuberculosis (strain ATCC 25618 / H37Rv).